Reading from the N-terminus, the 530-residue chain is Glucocorticoid modulatory element-binding protein 2 (530 aa).

The region spanning 81-163 (EEGENLEAEI…RKIMDSGELD (83 aa)) is the SAND domain. Cys-110 serves as a coordination point for Zn(2+). DNA contacts are provided by Lys-136, Lys-140, Lys-143, and Arg-154. Residue Lys-155 forms a Glycyl lysine isopeptide (Lys-Gly) (interchain with G-Cter in SUMO1); alternate linkage. Lys-155 participates in a covalent cross-link: Glycyl lysine isopeptide (Lys-Gly) (interchain with G-Cter in SUMO2); alternate. Zn(2+) is bound by residues His-167, Cys-171, and Cys-175. Residues 304-348 (QMDRSREQYARDLAALEQQCDEHRRRAKELKHKSQHLSNVLMTLT) adopt a coiled-coil conformation. Residue Ser-373 is modified to Phosphoserine.

In terms of assembly, homodimer, and heterodimer of GMEB1 and GMEB2. GMEB1 and GMEB2 form the parvovirus initiator complex (PIF). Interacts with the glucocorticoid receptor (NR3C1). May interact with CREB-binding protein (CBP). As to expression, expressed in peripheral blood lymphocytes and fetal liver. Expressed preferentially in reproductive and/or developmentally important cells, such as testis, placenta, bone marrow and fetal tissues.

It is found in the nucleus. Its subcellular location is the cytoplasm. Functionally, trans-acting factor that binds to glucocorticoid modulatory elements (GME) present in the TAT (tyrosine aminotransferase) promoter and increases sensitivity to low concentrations of glucocorticoids. Also binds to the transferrin receptor promoter. Essential auxiliary factor for the replication of parvoviruses. The polypeptide is Glucocorticoid modulatory element-binding protein 2 (GMEB2) (Homo sapiens (Human)).